A 258-amino-acid polypeptide reads, in one-letter code: Tritrans,polycis-undecaprenyl-diphosphate synthase (geranylgeranyl-diphosphate specific) (258 aa).

D37 is a catalytic residue. D37 contributes to the Mg(2+) binding site. Substrate is bound by residues 38 to 41 (GNRR), H54, and 82 to 84 (STE). Catalysis depends on N85, which acts as the Proton acceptor. Substrate contacts are provided by residues F86, R88, R207, and 213 to 215 (RIS). E226 contacts Mg(2+).

Belongs to the UPP synthase family. In terms of assembly, homodimer. The cofactor is Mg(2+).

The enzyme catalyses geranylgeranyl diphosphate + 7 isopentenyl diphosphate = tri-trans,hepta-cis-undecaprenyl diphosphate + 7 diphosphate. Catalyzes the sequential condensation of isopentenyl diphosphate (IPP) with geranylgeranyl diphosphate (GGPP) to yield (2Z,6Z,10Z,14Z,18Z,22Z,26Z,30E,34E,38E)-undecaprenyl diphosphate (tritrans,heptacis-UPP). It is probably the precursor of glycosyl carrier lipids. The polypeptide is Tritrans,polycis-undecaprenyl-diphosphate synthase (geranylgeranyl-diphosphate specific) (Thermoplasma volcanium (strain ATCC 51530 / DSM 4299 / JCM 9571 / NBRC 15438 / GSS1)).